We begin with the raw amino-acid sequence, 437 residues long: 3-ketoacyl-CoA thiolase (437 aa).

Catalysis depends on Cys-99, which acts as the Acyl-thioester intermediate. Residues His-392 and Cys-422 each act as proton acceptor in the active site.

Belongs to the thiolase-like superfamily. Thiolase family. In terms of assembly, heterotetramer of two alpha chains (FadJ) and two beta chains (FadI).

The protein resides in the cytoplasm. The catalysed reaction is an acyl-CoA + acetyl-CoA = a 3-oxoacyl-CoA + CoA. It functions in the pathway lipid metabolism; fatty acid beta-oxidation. Catalyzes the final step of fatty acid oxidation in which acetyl-CoA is released and the CoA ester of a fatty acid two carbons shorter is formed. This chain is 3-ketoacyl-CoA thiolase, found in Pectobacterium carotovorum subsp. carotovorum (strain PC1).